A 505-amino-acid polypeptide reads, in one-letter code: L-carnitine/gamma-butyrobetaine antiporter (505 aa).

Transmembrane regions (helical) follow at residues 10–30 (IEPK…WLTV), 50–70 (IWGW…FWLV), 92–112 (IFMM…SIEI), 143–163 (GPLP…FFFV), 195–215 (FYLV…TPLV), 231–251 (LDAI…ACGL), 263–283 (SYLS…SFIM), 316–336 (WTVF…IFLA), 347–367 (LCFG…TVLG), 403–423 (LSTA…VTLI), 446–466 (LLVR…LLAL), and 475–495 (AIIA…LSFI).

It belongs to the BCCT transporter (TC 2.A.15) family. CaiT subfamily. Homotrimer.

The protein localises to the cell inner membrane. It catalyses the reaction 4-(trimethylamino)butanoate(in) + (R)-carnitine(out) = 4-(trimethylamino)butanoate(out) + (R)-carnitine(in). It participates in amine and polyamine metabolism; carnitine metabolism. Functionally, catalyzes the exchange of L-carnitine for gamma-butyrobetaine. The polypeptide is L-carnitine/gamma-butyrobetaine antiporter (Salmonella arizonae (strain ATCC BAA-731 / CDC346-86 / RSK2980)).